Consider the following 509-residue polypeptide: Putative Rieske 2Fe-2S iron-sulfur protein YhfW (509 aa).

A Rieske domain is found at 423–509 (KPDVQFEDIS…IKPLKQIDLD (87 aa)). The [2Fe-2S] cluster site is built by Cys463, His465, Cys481, and His484. Residues Cys468 and Cys483 are joined by a disulfide bond.

This sequence belongs to the Rieske iron-sulfur protein family. The cofactor is [2Fe-2S] cluster.

In Bacillus subtilis (strain 168), this protein is Putative Rieske 2Fe-2S iron-sulfur protein YhfW (yhfW).